The chain runs to 329 residues: Flotillin-like protein FloA (329 aa).

2 helical membrane-spanning segments follow: residues 4–24 (FIPF…ILSF) and 27–47 (VGLW…TLVG).

The protein belongs to the flotillin-like FloA family. As to quaternary structure, homooligomerizes.

Its subcellular location is the cell membrane. It is found in the membrane raft. Functionally, found in functional membrane microdomains (FMM) that may be equivalent to eukaryotic membrane rafts. FMMs are highly dynamic and increase in number as cells age. Flotillins are thought to be important factors in membrane fluidity. The polypeptide is Flotillin-like protein FloA (Alkaliphilus metalliredigens (strain QYMF)).